Reading from the N-terminus, the 224-residue chain is Phosphoglycolate phosphatase (224 aa).

The Nucleophile role is filled by aspartate 11. Positions 11, 13, and 177 each coordinate Mg(2+).

This sequence belongs to the HAD-like hydrolase superfamily. CbbY/CbbZ/Gph/YieH family. Mg(2+) is required as a cofactor.

It carries out the reaction 2-phosphoglycolate + H2O = glycolate + phosphate. The protein operates within organic acid metabolism; glycolate biosynthesis; glycolate from 2-phosphoglycolate: step 1/1. Specifically catalyzes the dephosphorylation of 2-phosphoglycolate. Is involved in the dissimilation of the intracellular 2-phosphoglycolate formed during the DNA repair of 3'-phosphoglycolate ends, a major class of DNA lesions induced by oxidative stress. This is Phosphoglycolate phosphatase from Haemophilus influenzae (strain ATCC 51907 / DSM 11121 / KW20 / Rd).